Here is a 336-residue protein sequence, read N- to C-terminus: GTPase Obg (336 aa).

Positions 1 to 159 (MKFVDEATLI…KTLKLELKLL (159 aa)) constitute an Obg domain. Positions 160–329 (ADVGLVGLPN…LIEAIFAQLR (170 aa)) constitute an OBG-type G domain. Residues 166–173 (GLPNAGKS), 191–195 (FTTLA), 213–216 (DIPG), 283–286 (NKMD), and 310–312 (SAI) contribute to the GTP site. The Mg(2+) site is built by Ser-173 and Thr-193.

This sequence belongs to the TRAFAC class OBG-HflX-like GTPase superfamily. OBG GTPase family. As to quaternary structure, monomer. Mg(2+) is required as a cofactor.

It is found in the cytoplasm. Functionally, an essential GTPase which binds GTP, GDP and possibly (p)ppGpp with moderate affinity, with high nucleotide exchange rates and a fairly low GTP hydrolysis rate. Plays a role in control of the cell cycle, stress response, ribosome biogenesis and in those bacteria that undergo differentiation, in morphogenesis control. The chain is GTPase Obg from Desulfatibacillum aliphaticivorans.